Reading from the N-terminus, the 336-residue chain is MLTLGELAKKLDAELIGEASHVVDGLGTIQSAGPSQLTFLANPRYRSFLEQTNAGAVLIPESQREFCPVPALIVKDPYLSFAKASAFFEVAPQVQPGVHPAAVVDATAQIHTSASIGPNAVVEAGVIVGEGAVIMANSVVGAGCHIGDQCRIWPNVTIYHGVTLGPRTTIHANCVIGGDGFGFAFNGAGWTKLHQVGGVTIGADVEIGAGTTVDRGAIEDTIIGDGVILDNQIQVAHNVVIGDHTAIAGKAGIAGSAKIGSFCLIGGAAGIAGHIEVCDKVQILAMSLVSSSIKEPGTYGSALPVDSQSRYRRNVARFRNLDDLARRVRKLERLSD.

Residue His237 is the Proton acceptor of the active site.

It belongs to the transferase hexapeptide repeat family. LpxD subfamily. Homotrimer.

It catalyses the reaction a UDP-3-O-[(3R)-3-hydroxyacyl]-alpha-D-glucosamine + a (3R)-hydroxyacyl-[ACP] = a UDP-2-N,3-O-bis[(3R)-3-hydroxyacyl]-alpha-D-glucosamine + holo-[ACP] + H(+). It participates in bacterial outer membrane biogenesis; LPS lipid A biosynthesis. Its function is as follows. Catalyzes the N-acylation of UDP-3-O-acylglucosamine using 3-hydroxyacyl-ACP as the acyl donor. Is involved in the biosynthesis of lipid A, a phosphorylated glycolipid that anchors the lipopolysaccharide to the outer membrane of the cell. The protein is UDP-3-O-acylglucosamine N-acyltransferase of Alcanivorax borkumensis (strain ATCC 700651 / DSM 11573 / NCIMB 13689 / SK2).